The sequence spans 441 residues: Monodehydroascorbate reductase 3 (441 aa).

FAD contacts are provided by residues 14–17 (GGVA), Glu41, Arg48, Lys53, Ile96, and 147–148 (RE). Residues 173–179 (GGFLGLE), Glu197, Arg203, and Gly262 contribute to the NAD(+) site. An NADP(+)-binding site is contributed by 175–179 (FLGLE). NADP(+) contacts are provided by Arg203 and Gly262. Asp299 serves as a coordination point for FAD. 315–316 (EH) lines the NAD(+) pocket. 315-316 (EH) is an NADP(+) binding site. Residue Arg321 coordinates L-ascorbate. Tyr350 serves as a coordination point for FAD. Residue Tyr350 coordinates NAD(+). Position 350 (Tyr350) interacts with NADP(+). Arg352 lines the L-ascorbate pocket. Ser418 carries the phosphoserine modification.

The protein belongs to the FAD-dependent oxidoreductase family. It depends on FAD as a cofactor.

Its subcellular location is the cytoplasm. The catalysed reaction is 2 monodehydro-L-ascorbate radical + NADH + H(+) = 2 L-ascorbate + NAD(+). Its function is as follows. Catalyzes the conversion of monodehydroascorbate to ascorbate, oxidizing NADH in the process. Required for producing sufficient ascorbate to maintain the interaction between Piriformospora indica and Arabidopsis in a mutualistic state. This chain is Monodehydroascorbate reductase 3, found in Arabidopsis thaliana (Mouse-ear cress).